The sequence spans 62 residues: Guanine nucleotide-binding protein subunit gamma (62 aa).

The disordered stretch occupies residues 40–62; it reads DMLVSGPTDQHNPFQEKKSCSVL. Positions 53 to 62 are enriched in basic and acidic residues; the sequence is FQEKKSCSVL. At Cys-59 the chain carries Cysteine methyl ester. A lipid anchor (S-geranylgeranyl cysteine) is attached at Cys-59. The propeptide at 60 to 62 is removed in mature form; it reads SVL.

Belongs to the G protein gamma family. As to quaternary structure, g proteins are composed of 3 units, alpha, beta and gamma. Interacts with gpb-1 and gpb-2. In terms of tissue distribution, predominantly expressed in the central nervous system.

The protein resides in the cell membrane. Functionally, guanine nucleotide-binding proteins (G proteins) are involved as a modulator or transducer in various transmembrane signaling systems. The beta and gamma chains are required for the GTPase activity, for replacement of GDP by GTP, and for G protein-effector interaction. The protein is Guanine nucleotide-binding protein subunit gamma (gpc-1) of Caenorhabditis elegans.